The primary structure comprises 288 residues: MKFLLAFSLLIPSVVFASSSKFQQVEQDVKAIEVSLSARIGVSVLDTQNGEYWDYNGNQRFPLTSTFKTIACAKLLYDAEQGKVNPNSTVEIKKADLVTYSPVIEKQVGQAITLDDACFATMTTSDNTAANIILSAVGGPKGVTDFLRQIGDKETRLDRIEPDLNEGKLGDLRDTTTPKAIASTLNKFLFGSALSEMNQKKLESWMVNNQVTGNLLRSVLPAGWNIADRSGAGGFGARSITAVVWSEHQAPIIVSIYLAQTQASMAERNDAIVKIGHSIFDVYTSQSR.

The signal sequence occupies residues 1-17; it reads MKFLLAFSLLIPSVVFA. Ser-65 (acyl-ester intermediate) is an active-site residue. Cys-72 and Cys-118 are joined by a disulfide. Residue 229 to 231 coordinates substrate; sequence RSG.

It belongs to the class-A beta-lactamase family. Monomer.

The enzyme catalyses a beta-lactam + H2O = a substituted beta-amino acid. Inhibited by p-chloromercuribenzoate but not by cloxacillin. Functionally, hydrolyzes penicillin, ampicillin and carbenicillin but not other antibiotics including oxacillin, methicillin and cloxacillin. The polypeptide is Beta-lactamase PSE-1 (Pseudomonas aeruginosa).